Consider the following 967-residue polypeptide: Leucine--tRNA ligase (967 aa).

Residues Pro-43–His-53 carry the 'HIGH' region motif. Residues Lys-650–Ser-654 carry the 'KMSKS' region motif. Position 653 (Lys-653) interacts with ATP.

It belongs to the class-I aminoacyl-tRNA synthetase family.

It is found in the cytoplasm. The catalysed reaction is tRNA(Leu) + L-leucine + ATP = L-leucyl-tRNA(Leu) + AMP + diphosphate. The polypeptide is Leucine--tRNA ligase (Pyrococcus abyssi (strain GE5 / Orsay)).